Consider the following 151-residue polypeptide: Dehydrin Rab16D (151 aa).

Positions 1 to 138 are disordered; that stretch reads MEYQGQHGGH…TADAGGEKKG (138 aa). Positions 39-51 are enriched in basic and acidic residues; that stretch reads EPAREDKKTDGVL. Composition is skewed to low complexity over residues 90-105 and 117-132; these read GNNQ…TTTG and IATG…TADA.

This sequence belongs to the plant dehydrin family.

The sequence is that of Dehydrin Rab16D (RAB16D) from Oryza sativa subsp. indica (Rice).